Reading from the N-terminus, the 567-residue chain is Dihydroxy-acid dehydratase (567 aa).

Cys52 serves as a coordination point for [2Fe-2S] cluster. Asp84 serves as a coordination point for Mg(2+). Cys125 contacts [2Fe-2S] cluster. The Mg(2+) site is built by Asp126 and Lys127. At Lys127 the chain carries N6-carboxylysine. Cys197 contributes to the [2Fe-2S] cluster binding site. Mg(2+) is bound at residue Glu448. The active-site Proton acceptor is the Ser474.

The protein belongs to the IlvD/Edd family. As to quaternary structure, homodimer. The cofactor is [2Fe-2S] cluster. Mg(2+) serves as cofactor.

It carries out the reaction (2R)-2,3-dihydroxy-3-methylbutanoate = 3-methyl-2-oxobutanoate + H2O. It catalyses the reaction (2R,3R)-2,3-dihydroxy-3-methylpentanoate = (S)-3-methyl-2-oxopentanoate + H2O. Its pathway is amino-acid biosynthesis; L-isoleucine biosynthesis; L-isoleucine from 2-oxobutanoate: step 3/4. The protein operates within amino-acid biosynthesis; L-valine biosynthesis; L-valine from pyruvate: step 3/4. Its function is as follows. Functions in the biosynthesis of branched-chain amino acids. Catalyzes the dehydration of (2R,3R)-2,3-dihydroxy-3-methylpentanoate (2,3-dihydroxy-3-methylvalerate) into 2-oxo-3-methylpentanoate (2-oxo-3-methylvalerate) and of (2R)-2,3-dihydroxy-3-methylbutanoate (2,3-dihydroxyisovalerate) into 2-oxo-3-methylbutanoate (2-oxoisovalerate), the penultimate precursor to L-isoleucine and L-valine, respectively. In Streptococcus pneumoniae serotype 2 (strain D39 / NCTC 7466), this protein is Dihydroxy-acid dehydratase.